The sequence spans 930 residues: SCY1-like protein 2 (930 aa).

The 296-residue stretch at 32–327 (FDVGRHIASG…ADQMTKIPFF (296 aa)) folds into the Protein kinase domain. The stretch at 443-479 (DEIKNSVLPMVYRALEAPSIQIQELCLNIIPTFANLI) is one HEAT repeat. 2 positions are modified to phosphoserine: Ser658 and Ser677. The disordered stretch occupies residues 658–706 (SGSESENREDGMQGKQKRGSLTLEEKQKLAKEQEQAQKLKSQQPLKPQV). Over residues 680 to 694 (LEEKQKLAKEQEQAQ) the composition is skewed to basic and acidic residues. Low complexity predominate over residues 695–705 (KLKSQQPLKPQ). Thr708 carries the phosphothreonine modification. Residues 895 to 930 (GMQGNPFFNPQNFAQPPPTTMTSSSSASNDLKDLFG) form a disordered region. Residues 897–922 (QGNPFFNPQNFAQPPPTTMTSSSSAS) show a composition bias toward low complexity.

This sequence belongs to the protein kinase superfamily. As to quaternary structure, interacts with clathrin and AP2B1; the interaction mediates the association with the AP-2 complex. Could autophosphorylate in presence of poly-L-lysine. Ubiquitously expressed.

The protein resides in the cytoplasmic vesicle. The protein localises to the clathrin-coated vesicle. It localises to the golgi apparatus. It is found in the trans-Golgi network membrane. Its subcellular location is the endosome membrane. Functionally, component of the AP2-containing clathrin coat that may regulate clathrin-dependent trafficking at plasma membrane, TGN and endosomal system. A possible serine/threonine-protein kinase toward the beta2-subunit of the plasma membrane adapter complex AP2 and other proteins in presence of poly-L-lysine has not been confirmed. By regulating the expression of excitatory receptors at synapses, plays an essential role in neuronal function and signaling and in brain development. The polypeptide is SCY1-like protein 2 (Mus musculus (Mouse)).